The following is a 214-amino-acid chain: MKEERNYNFDGVSTNRLKQQLLEEVRKKDAVQLSIFELRHKITELEAKLNTDNEGSEWKTRYETQLELNDELEKQIVYLKEKVEKIHGNSSDRLSSIRVYERMPVESLNTLLKQLEEEKKTLESQVKYYALKLEQESKAYQKINNERRTYLAEMSQGSGLHQVSKRQQVDQLPRMQENLVKTGRYNPAKQKTVSAKRGPVKKITRPNHLPELHP.

Positions 29–154 (DAVQLSIFEL…NERRTYLAEM (126 aa)) form a coiled coil. Residues 155 to 170 (SQGSGLHQVSKRQQVD) are compositionally biased toward polar residues. The interval 155–214 (SQGSGLHQVSKRQQVDQLPRMQENLVKTGRYNPAKQKTVSAKRGPVKKITRPNHLPELHP) is disordered.

The protein belongs to the CCDC169 family.

In Homo sapiens (Human), this protein is Coiled-coil domain-containing protein 169 (CCDC169).